Reading from the N-terminus, the 350-residue chain is MTKITNDLFLKAARKEQVDRIPVWYMRQAGRSQPEYRKLKEKYSLFEITHQPEICAYVTKLPVDQYGVDAAILYKDIMTPLPGMGVDVEIKSGIGPVIHNPIRTFQDVEKLTIFKPEIEVPYVLDTIKLLADDMLDVPLIGFAGAPFTLASYMIEGGPSKNYHQTKSFMYREPEVWAILMEKLGRMTANYLIAQINAGASAVQLFDSWVGALSRADYAQYIRPVIEMIVKEVKAVHPTTPIIMQAVGASHLLAEWETMPLDVVGVDWRETITTARQKVPTKAIQGNLDPSTLLAPEKCIAETERILQEGILEPGYIFNLGHGVFPEVPPEMLKKLTKYIHERSEILLKKG.

Substrate contacts are provided by residues 27-31 (RQAGR), Phe46, Asp76, Tyr152, Ser207, and His321.

It belongs to the uroporphyrinogen decarboxylase family. As to quaternary structure, homodimer.

It localises to the cytoplasm. It carries out the reaction uroporphyrinogen III + 4 H(+) = coproporphyrinogen III + 4 CO2. The protein operates within porphyrin-containing compound metabolism; protoporphyrin-IX biosynthesis; coproporphyrinogen-III from 5-aminolevulinate: step 4/4. Functionally, catalyzes the decarboxylation of four acetate groups of uroporphyrinogen-III to yield coproporphyrinogen-III. In Listeria innocua serovar 6a (strain ATCC BAA-680 / CLIP 11262), this protein is Uroporphyrinogen decarboxylase.